Reading from the N-terminus, the 826-residue chain is Elongator complex protein 2 (826 aa).

14 WD repeats span residues 13–53, 56–100, 105–152, 158–200, 205–246, 281–329, 339–378, 386–425, 436–474, 565–609, 612–651, 667–706, 712–753, and 777–826; these read CCPN…VVTN, GHTA…LLKA, GHEG…VMCL, GNGF…FQKV, GHED…TSLE, GHEN…GVWL, GNTLGFYDCQFNEDGSMIIAHAFHGALHLWKQNTVNPREW, GHFDGVQDLVWDPEGEFIITVGTDQTTRLFAPWKRKDQSQ, IHGYDLKCLAMINRFQFVSGADEKVLRVFSAPRNFVENF, GHGY…QVQN, FHSLTVTQMAFSPNEKFLLAVSRDRTWSLWKKQDTISPEF, VHSRIIWSCDWSPDSKYFFTGSRDKKVVVWGECDSTDDCI, PCSS…CLYT, and SHTL…KCAL.

It belongs to the WD repeat ELP2 family. Component of the elongator complex which consists of ELP1, ELP2, ELP3, ELP4, ELP5 and ELP6. Interacts with STAT3 and JAKs.

The protein resides in the cytoplasm. It is found in the nucleus. Its pathway is tRNA modification; 5-methoxycarbonylmethyl-2-thiouridine-tRNA biosynthesis. Functionally, component of the elongator complex which is required for multiple tRNA modifications, including mcm5U (5-methoxycarbonylmethyl uridine), mcm5s2U (5-methoxycarbonylmethyl-2-thiouridine), and ncm5U (5-carbamoylmethyl uridine). The elongator complex catalyzes the formation of carboxymethyluridine in the wobble base at position 34 in tRNAs. This Homo sapiens (Human) protein is Elongator complex protein 2 (ELP2).